Reading from the N-terminus, the 358-residue chain is Probable D-xylulose reductase A (358 aa).

Zn(2+) contacts are provided by Cys47, His72, and Glu73. 182-187 is a binding site for NAD(+); sequence GAGPVG.

It belongs to the zinc-containing alcohol dehydrogenase family. Requires Zn(2+) as cofactor.

It carries out the reaction xylitol + NAD(+) = D-xylulose + NADH + H(+). It participates in carbohydrate degradation; L-arabinose degradation via L-arabinitol; D-xylulose 5-phosphate from L-arabinose (fungal route): step 4/5. In terms of biological role, xylitol dehydrogenase which catalyzes the conversion of xylitol to D-xylulose. Xylose is a major component of hemicelluloses such as xylan. Most fungi utilize D-xylose via three enzymatic reactions, xylose reductase (XR), xylitol dehydrogenase (XDH), and xylulokinase, to form xylulose 5-phosphate, which enters pentose phosphate pathway. In Aspergillus clavatus (strain ATCC 1007 / CBS 513.65 / DSM 816 / NCTC 3887 / NRRL 1 / QM 1276 / 107), this protein is Probable D-xylulose reductase A (xdhA).